The sequence spans 925 residues: Protein translocase subunit SecA (925 aa).

ATP-binding positions include glutamine 87, 105–109, and aspartate 515; that span reads GEGKT. Cysteine 909, cysteine 911, cysteine 920, and histidine 921 together coordinate Zn(2+).

Belongs to the SecA family. Monomer and homodimer. Part of the essential Sec protein translocation apparatus which comprises SecA, SecYEG and auxiliary proteins SecDF-YajC and YidC. Requires Zn(2+) as cofactor.

It is found in the cell inner membrane. The protein localises to the cytoplasm. It catalyses the reaction ATP + H2O + cellular proteinSide 1 = ADP + phosphate + cellular proteinSide 2.. Part of the Sec protein translocase complex. Interacts with the SecYEG preprotein conducting channel. Has a central role in coupling the hydrolysis of ATP to the transfer of proteins into and across the cell membrane, serving both as a receptor for the preprotein-SecB complex and as an ATP-driven molecular motor driving the stepwise translocation of polypeptide chains across the membrane. The protein is Protein translocase subunit SecA of Cupriavidus taiwanensis (strain DSM 17343 / BCRC 17206 / CCUG 44338 / CIP 107171 / LMG 19424 / R1) (Ralstonia taiwanensis (strain LMG 19424)).